Reading from the N-terminus, the 330-residue chain is Biotin synthase (330 aa).

Positions 53 to 276 (NNIRLNVLLS…VFPFKELRLS (224 aa)) constitute a Radical SAM core domain. [4Fe-4S] cluster contacts are provided by Cys-68, Cys-72, and Cys-75. [2Fe-2S] cluster contacts are provided by Cys-112, Cys-144, Cys-204, and Arg-274.

Belongs to the radical SAM superfamily. Biotin synthase family. In terms of assembly, homodimer. [4Fe-4S] cluster is required as a cofactor. It depends on [2Fe-2S] cluster as a cofactor.

It catalyses the reaction (4R,5S)-dethiobiotin + (sulfur carrier)-SH + 2 reduced [2Fe-2S]-[ferredoxin] + 2 S-adenosyl-L-methionine = (sulfur carrier)-H + biotin + 2 5'-deoxyadenosine + 2 L-methionine + 2 oxidized [2Fe-2S]-[ferredoxin]. It participates in cofactor biosynthesis; biotin biosynthesis; biotin from 7,8-diaminononanoate: step 2/2. In terms of biological role, catalyzes the conversion of dethiobiotin (DTB) to biotin by the insertion of a sulfur atom into dethiobiotin via a radical-based mechanism. The chain is Biotin synthase from Streptococcus agalactiae serotype III (strain NEM316).